The primary structure comprises 1177 residues: MTGQLVQYGRHRQRRSYARISEVLELPNLIEIQTSSYQWFLDEGLREMFQDISPIEDFTGNLSLEFIDYSLGEPKYSVDECKERDVTYAAPLRVKVRLINKETGEVKEQDVFMGDFPLMTETGTFVINGAERVIVSQLVRSPSVYYSGKVDKNGKRGFTATVIPNRGAWLEYETDAKDVVYVRIDRTRKLPVTVLLRALGFGSDQEITELLGDNEYLSNTLEKDNTDSTEKALLEIYERLRPGEPPTVENAKSLLVSRFFDPKRYDLANVGRYKINKKLHIKNRLFNQRLAETLVDPETGEILAAEGTILDRRTLDRILPYLEKNIGFKTAKPMGGVVEGDVELQSIKIYAPESEGERVINVIGNANITRDVKHITPGDILASISYFFNLLYKVGDTDDIDHLGNRRLRSVGELLQNQFRIGLSRMERVVRERMSIQDTNAITPQALINIRPVIASIKEFFGSSQLSQFMDQTNPLAELTHKRRLSALGPGGLTRERAGFEVRDVHYSHYGRMCPIETPEGPNIGLINSLSSFAKVNEFGFIETPYRRVDPETGLVTGHVDYLTADEEDNYVVAQANMKLSEEGEFLDEDIVARFRGENIVTNKERIDYMDVSPKQVVSAATACIPFLENDDSNRALMGANMQRQAVPLMNPESPIVGTGMEYVSAKDSGAAVICKHPGIVERVEAREVWVRRYVEVDGQTVKGDLDRYKMQKFIRSNQGTCYNQRPIVSVGNEVVKGEILADGPSMELGELALGRNVLVGFMTWDGYNYEDAIIMSERLVKDDVYTSIHIEEYESEARDTKLGPEEITRDIPNVGEDALRNLDERGIIRVGAEVKDGDLLVGKVTPKGVTELTAEERLLHAIFGEKAREVRDTSLRVPHGGGGIILDVKVFNREDGDELPPGVNQLVRAYIVQKRKISEGDKMAGRHGNKGVISRILPEEDMPYLPDGTPIDIMLNPLGVPSRMNIGQVLELHLGMAARYLGIHIATPVFDGAREEDVWGTIEEAGMANDAKTILYDGRTGEPFDNRVSVGVMYMIKLAHMVDDKLHARSTGPYSLVTQQPLGGKAQFGGQRFGEMEVWALEAYGAAYTLQEILTVKSDDVVGRVKTYEAIVKGENVPEPGVPESFKVLIKELQSLGMDVKMMSSDDTEIEMRDTEDDDDHQSADKLNVEVETTKE.

Residues 1147 to 1161 (DDTEIEMRDTEDDDD) show a composition bias toward acidic residues. The tract at residues 1147–1177 (DDTEIEMRDTEDDDDHQSADKLNVEVETTKE) is disordered. A compositionally biased stretch (basic and acidic residues) spans 1162 to 1177 (HQSADKLNVEVETTKE).

The protein belongs to the RNA polymerase beta chain family. In terms of assembly, the RNAP catalytic core consists of 2 alpha, 1 beta, 1 beta' and 1 omega subunit. When a sigma factor is associated with the core the holoenzyme is formed, which can initiate transcription.

The catalysed reaction is RNA(n) + a ribonucleoside 5'-triphosphate = RNA(n+1) + diphosphate. DNA-dependent RNA polymerase catalyzes the transcription of DNA into RNA using the four ribonucleoside triphosphates as substrates. The sequence is that of DNA-directed RNA polymerase subunit beta from Bacillus thuringiensis (strain Al Hakam).